Here is a 385-residue protein sequence, read N- to C-terminus: Prophage integrase IntS (385 aa).

In terms of domain architecture, Core-binding (CB) spans 91–172 (NSFSAIYKEW…RCGEVFRYAI (82 aa)). Residues 195-373 (KNFPFLPADQ…QYLDKRREMM (179 aa)) enclose the Tyr recombinase domain. Catalysis depends on residues Arg234, Lys261, His324, Arg327, and His350. Catalysis depends on Tyr360, which acts as the O-(3'-phospho-DNA)-tyrosine intermediate.

It belongs to the 'phage' integrase family.

In terms of biological role, integrase is necessary for integration of the phage into the host genome by site-specific recombination. In conjunction with excisionase, integrase is also necessary for excision of the prophage from the host genome. The chain is Prophage integrase IntS (intS) from Escherichia coli (strain K12).